Consider the following 743-residue polypeptide: Threonine--tRNA ligase (743 aa).

Over residues 1 to 15 (MSADSPSSPASSQAA) the composition is skewed to low complexity. The tract at residues 1–30 (MSADSPSSPASSQAAEVQVRLPDGSLKTQP) is disordered. Positions 13–76 (QAAEVQVRLP…GEIADDENVV (64 aa)) constitute a TGS domain. The tract at residues 264–619 (DHRVLGKQHG…LIEHFAGAFP (356 aa)) is catalytic. The tract at residues 354–404 (AWSTRLDKDDLSKDDEDKLIAAAEVFGVKLPDYKPSASNDAKKDVLHRWQL) is insert. Residues C416, H467, and H596 each contribute to the Zn(2+) site.

Belongs to the class-II aminoacyl-tRNA synthetase family. Homodimer. Zn(2+) is required as a cofactor.

The protein localises to the cytoplasm. The enzyme catalyses tRNA(Thr) + L-threonine + ATP = L-threonyl-tRNA(Thr) + AMP + diphosphate + H(+). Functionally, catalyzes the attachment of threonine to tRNA(Thr) in a two-step reaction: L-threonine is first activated by ATP to form Thr-AMP and then transferred to the acceptor end of tRNA(Thr). Also edits incorrectly charged L-seryl-tRNA(Thr). This Rhodopirellula baltica (strain DSM 10527 / NCIMB 13988 / SH1) protein is Threonine--tRNA ligase.